A 1077-amino-acid polypeptide reads, in one-letter code: MLQHATITKMTDFSDLDDDDIVGLLDQDVNRCVETSVTRHKLAMQRDLTGKVLDGEKRYYEEVVTSVTYKPTHHQLRYENLNTYLYPTNYEVREYQFNIVHRALFENVLCAIPTGMGKTFIASTVMLNYYRWTVGTKIIFTAPTRPLVAQQIKACLGITGIPYNDTAILLDKSRKHREQIWSEKRVFFATPQVVENDLKRGALNPKDVVLLVIDEAHRARGSYAYVELTKFIDRFNTSYRVLALTATPATDLEGVQEVVDNLQISKIELRTEESEDIVRYMKRRDTEEVIVPLIPEIEDIIEQLGIAITPVLKEAVQLGLYDDCEPVNINAFIAMQQSQKILANSSIPEGVKWKNYFILQLLCHVGHMLKRLKIYGIQTFYTYFDNKYREFTTKYGIGKSTNKTAASFYYSSILKNITKTCQAYTANPSFLGHGKLYRVRDELSTFFASAGDDSRVIIFTELRESALELVKCVDNMNDRFIRPHIFIGQAKGKESFDDGEYLRKHAPKGRKKVDRIRRLEEEKRLADEKLRKKEEEKLARTARRTGSSEEAQISGMTQKQQKEVISLFKKGDYNVLVCTSIGEEGLDIGEVDMIICYDTTSSPIKNIQRMGRTGRKRDGRIVLLLSDNEPRKFEQAMEDYAQLQRLIGEESLNYKVTDRIIPKGINPQCQKEFITISEKNSAVNGMEDADSVIKYATQAMLGKLDKRKAVKKSTGKAAPKRFFMPDDVETGIVPAMKLVKSYKYTENGEAFPVAESVKGRRPKSKDTLLDRLEYDSLESELSSPEKATKSQNVVEIRPKLLSDILLKDEDTLHFEHSSSCPKVDSLASVTTLSSDNKSTPDQLKRSQSDNGFGIPPKRQRLCYDTSANCSSTDTHLMEAQSKNKDNPANRKTGEPHYKLEVSPLKREEDDRDVIPQNIAVKPEVPHLTQECLTTGRVYKSEFSKYDGFLTVSERRYFEQNYSPVHLVSLEPRPVFSRSRNRVAIVPHSERVQRLINIFAAMDTDDKVHIIDMHRKHALARRTVHGGPTENSDLLQPSSDGIIVPNDDIRLFSLRPRATDFEDMLEDDEGLSELLDSD.

The 168-residue stretch at 99 to 266 (IVHRALFENV…EVVDNLQISK (168 aa)) folds into the Helicase ATP-binding domain. ATP is bound at residue 112–119 (IPTGMGKT). The DEAH box signature appears at 214–217 (DEAH). Residues 511–660 (KKVDRIRRLE…SLNYKVTDRI (150 aa)) enclose the Helicase C-terminal domain. 2 disordered regions span residues 536–556 (EKLA…ISGM) and 831–859 (TLSS…PKRQ). The span at 831-841 (TLSSDNKSTPD) shows a compositional bias: polar residues.

The protein belongs to the DEAD box helicase family. DEAH subfamily. FANCM sub-subfamily. Interacts with the MHF histone-fold complex to form the FANCM-MHF complex.

The protein localises to the nucleus. It carries out the reaction ATP + H2O = ADP + phosphate + H(+). Functionally, ATP-dependent DNA helicase involved in DNA damage repair by homologous recombination and in genome maintenance. Capable of unwinding D-loops. Plays a role in limiting crossover recombinants during mitotic DNA double-strand break (DSB) repair. Component of a FANCM-MHF complex which promotes gene conversion at blocked replication forks, probably by reversal of the stalled fork. The chain is ATP-dependent DNA helicase MPH1 from Eremothecium gossypii (strain ATCC 10895 / CBS 109.51 / FGSC 9923 / NRRL Y-1056) (Yeast).